We begin with the raw amino-acid sequence, 379 residues long: UDP-4-amino-4-deoxy-L-arabinose--oxoglutarate aminotransferase (379 aa).

An N6-(pyridoxal phosphate)lysine modification is found at lysine 182.

Belongs to the DegT/DnrJ/EryC1 family. ArnB subfamily. Homodimer. The cofactor is pyridoxal 5'-phosphate.

The enzyme catalyses UDP-4-amino-4-deoxy-beta-L-arabinose + 2-oxoglutarate = UDP-beta-L-threo-pentopyranos-4-ulose + L-glutamate. It functions in the pathway nucleotide-sugar biosynthesis; UDP-4-deoxy-4-formamido-beta-L-arabinose biosynthesis; UDP-4-deoxy-4-formamido-beta-L-arabinose from UDP-alpha-D-glucuronate: step 2/3. It participates in bacterial outer membrane biogenesis; lipopolysaccharide biosynthesis. Catalyzes the conversion of UDP-4-keto-arabinose (UDP-Ara4O) to UDP-4-amino-4-deoxy-L-arabinose (UDP-L-Ara4N). The modified arabinose is attached to lipid A and is required for resistance to polymyxin and cationic antimicrobial peptides. The chain is UDP-4-amino-4-deoxy-L-arabinose--oxoglutarate aminotransferase from Salmonella paratyphi A (strain ATCC 9150 / SARB42).